The sequence spans 245 residues: Flavin-dependent thymidylate synthase (245 aa).

Residues 5-210 (IKVRLVNYTK…ELRPIIRWAK (206 aa)) enclose the ThyX domain. FAD-binding positions include S59, 83-85 (RHR), and Q91. DUMP is bound by residues 80–83 (QLVR), 91–95 (QQSMR), and R149. The ThyX motif signature appears at 83–93 (RHRIASYTQQS). Residues 165–167 (NLR) and H171 each bind FAD. R176 lines the dUMP pocket. R176 functions as the Involved in ionization of N3 of dUMP, leading to its activation in the catalytic mechanism.

This sequence belongs to the thymidylate synthase ThyX family. Homotetramer. FAD serves as cofactor.

It catalyses the reaction dUMP + (6R)-5,10-methylene-5,6,7,8-tetrahydrofolate + NADPH + H(+) = dTMP + (6S)-5,6,7,8-tetrahydrofolate + NADP(+). It functions in the pathway pyrimidine metabolism; dTTP biosynthesis. Functionally, catalyzes the reductive methylation of 2'-deoxyuridine-5'-monophosphate (dUMP) to 2'-deoxythymidine-5'-monophosphate (dTMP) while utilizing 5,10-methylenetetrahydrofolate (mTHF) as the methyl donor, and NADPH and FADH(2) as the reductant. The protein is Flavin-dependent thymidylate synthase of Thermococcus onnurineus (strain NA1).